Reading from the N-terminus, the 474-residue chain is 3-isopropylmalate dehydratase large subunit (474 aa).

Residues C353, C414, and C417 each coordinate [4Fe-4S] cluster.

It belongs to the aconitase/IPM isomerase family. LeuC type 1 subfamily. Heterodimer of LeuC and LeuD. The cofactor is [4Fe-4S] cluster.

The catalysed reaction is (2R,3S)-3-isopropylmalate = (2S)-2-isopropylmalate. The protein operates within amino-acid biosynthesis; L-leucine biosynthesis; L-leucine from 3-methyl-2-oxobutanoate: step 2/4. In terms of biological role, catalyzes the isomerization between 2-isopropylmalate and 3-isopropylmalate, via the formation of 2-isopropylmaleate. This is 3-isopropylmalate dehydratase large subunit from Xylella fastidiosa (strain M23).